The sequence spans 211 residues: Arginine exporter protein ArgO (211 aa).

Helical transmembrane passes span 1–21 (MFSY…PLGP), 37–57 (IMIA…GIFG), 68–88 (LLAL…FGAF), 111–131 (IIAT…DTFV), 147–167 (WFAL…AILA), and 182–202 (IINL…ARDG).

Belongs to the LysE/ArgO transporter (TC 2.A.75) family.

The protein localises to the cell inner membrane. The catalysed reaction is L-arginine(in) = L-arginine(out). Involved in the export of arginine. Important to control the intracellular level of arginine and the correct balance between arginine and lysine. This Escherichia coli O157:H7 protein is Arginine exporter protein ArgO.